Reading from the N-terminus, the 411-residue chain is Bestrophin homolog 26 (411 aa).

A run of 4 helical transmembrane segments spans residues 30–50 (FTAI…FMVI), 73–93 (SHQE…SSVV), 235–255 (IPIP…YFAV), and 272–292 (TWIT…MGWM).

This sequence belongs to the anion channel-forming bestrophin (TC 1.A.46) family. Calcium-sensitive chloride channel subfamily. In terms of assembly, forms oligomers.

Its subcellular location is the cell membrane. Functionally, forms chloride channels. In Caenorhabditis elegans, this protein is Bestrophin homolog 26 (best-26).